The following is a 362-amino-acid chain: Probable aromatic amino acid hydroxylase (362 aa).

Fe cation contacts are provided by histidine 200 and histidine 205.

The protein belongs to the biopterin-dependent aromatic amino acid hydroxylase family. It depends on Fe(2+) as a cofactor.

This chain is Probable aromatic amino acid hydroxylase, found in Chlamydia pneumoniae (Chlamydophila pneumoniae).